The following is a 417-amino-acid chain: DNA primase DnaG (417 aa).

A Toprim domain is found at 171-257; it reads DAIIIVEGRA…SVEDMARKEI (87 aa). Glutamate 177, aspartate 219, and aspartate 221 together coordinate Mg(2+). Positions 278–325 are disordered; sequence VPGEKRTQDLRPQKPGASEQNSIKKENVENENESTPTSFEPISEPAPP. A compositionally biased stretch (basic and acidic residues) spans 279–289; it reads PGEKRTQDLRP.

It belongs to the archaeal DnaG primase family. Forms a ternary complex with MCM helicase and DNA. Mg(2+) is required as a cofactor.

The catalysed reaction is ssDNA + n NTP = ssDNA/pppN(pN)n-1 hybrid + (n-1) diphosphate.. Functionally, RNA polymerase that catalyzes the synthesis of short RNA molecules used as primers for DNA polymerase during DNA replication. The chain is DNA primase DnaG from Methanosphaerula palustris (strain ATCC BAA-1556 / DSM 19958 / E1-9c).